The sequence spans 518 residues: Probable glycosyltransferase At5g03795 (518 aa).

The Cytoplasmic segment spans residues 1–25 (MGDEDVDGKCKNMSACSSTTSYSTK). Residues 26 to 46 (LFLFMVPLVVISGFVFVNIGP) form a helical; Signal-anchor for type II membrane protein membrane-spanning segment. The Lumenal segment spans residues 47-518 (KDSTSLLTSL…RRLNVKIREV (472 aa)). N-linked (GlcNAc...) asparagine glycans are attached at residues Asn104, Asn113, Asn120, Asn282, and Asn320.

The protein belongs to the glycosyltransferase 47 family.

The protein resides in the golgi apparatus membrane. Functionally, may be involved in cell wall biosynthesis. This Arabidopsis thaliana (Mouse-ear cress) protein is Probable glycosyltransferase At5g03795.